Consider the following 387-residue polypeptide: Phosphoglycerate kinase (387 aa).

Residues D21–N23, R36, H59–R62, R113, and R146 contribute to the substrate site. ATP-binding positions include K197, E314, and G340–T343.

It belongs to the phosphoglycerate kinase family. Monomer.

The protein resides in the cytoplasm. The catalysed reaction is (2R)-3-phosphoglycerate + ATP = (2R)-3-phospho-glyceroyl phosphate + ADP. Its pathway is carbohydrate degradation; glycolysis; pyruvate from D-glyceraldehyde 3-phosphate: step 2/5. This Alcanivorax borkumensis (strain ATCC 700651 / DSM 11573 / NCIMB 13689 / SK2) protein is Phosphoglycerate kinase.